A 649-amino-acid polypeptide reads, in one-letter code: Protein translocase subunit SecA 2 (649 aa).

ATP is bound by residues Gln-105, 123 to 127 (GEGKT), and Asp-535.

The protein belongs to the SecA family. Monomer and homodimer. Part of the essential Sec protein translocation apparatus which comprises SecA, SecYEG and auxiliary proteins SecDF-YajC and YidC.

Its subcellular location is the cell inner membrane. It is found in the cytoplasm. It catalyses the reaction ATP + H2O + cellular proteinSide 1 = ADP + phosphate + cellular proteinSide 2.. Functionally, part of the Sec protein translocase complex. Interacts with the SecYEG preprotein conducting channel. Has a central role in coupling the hydrolysis of ATP to the transfer of proteins into and across the cell membrane, serving both as a receptor for the preprotein-SecB complex and as an ATP-driven molecular motor driving the stepwise translocation of polypeptide chains across the membrane. This Magnetococcus marinus (strain ATCC BAA-1437 / JCM 17883 / MC-1) protein is Protein translocase subunit SecA 2.